The chain runs to 176 residues: Cathelicidin-2 (176 aa).

The N-terminal stretch at 1–29 is a signal peptide; it reads METQRASLSLGRCSLWLLLLGLVLPSASA. Pyrrolidone carboxylic acid is present on Q30. Residues 30 to 130 constitute a propeptide that is removed on maturation; that stretch reads QALSYREAVL…DINCNELQSV (101 aa). Disulfide bonds link C85/C96 and C107/C124. A disordered region spans residues 157-176; that stretch reads IFPPIRPPFRPPLGPFPGRR. P173 carries the proline amide modification. Residues 174–176 constitute a propeptide, removed in mature form; that stretch reads GRR.

It belongs to the cathelicidin family. Elastase is responsible for its maturation. In terms of tissue distribution, large granules of neutrophils.

It localises to the secreted. Its function is as follows. Exerts, in vitro, a potent antimicrobial activity. Probably due to an impairment of the function of the respiratory chain and of energy-dependent activities in the inner membrane of susceptible microorganisms. This Bos taurus (Bovine) protein is Cathelicidin-2 (CATHL2).